The sequence spans 157 residues: Probable succinate transporter subunit YjjB (157 aa).

The next 4 helical transmembrane spans lie at L10–V30, A55–I75, I87–I107, and F129–W149.

This sequence belongs to the ThrE exporter (TC 2.A.79) family. In terms of assembly, the transporter is composed of YjjB and YjjP.

The protein resides in the cell inner membrane. Involved in succinate export with YjjP. Both proteins are required for export. Participates in succinate export, but also in the export of other dicarboxylates, such as fumarate and malate. Contributes to succinate production under both aerobic and anaerobic conditions, and increases fumarate and malate production during anaerobic succinate production. The polypeptide is Probable succinate transporter subunit YjjB (Klebsiella aerogenes (strain ATCC 13048 / DSM 30053 / CCUG 1429 / JCM 1235 / KCTC 2190 / NBRC 13534 / NCIMB 10102 / NCTC 10006 / CDC 819-56) (Enterobacter aerogenes)).